Reading from the N-terminus, the 845-residue chain is Cadherin-related family member 5 (845 aa).

Positions 1-25 (MGSWALLWPPLLFTGLLVRPPGTMA) are cleaved as a signal peptide. Over 26 to 669 (QAQYCSVNKD…DKRFSVVDMA (644 aa)) the chain is Extracellular. Residues Asn-44, Asn-81, Asn-140, Asn-198, Asn-297, Asn-308, and Asn-405 are each glycosylated (N-linked (GlcNAc...) asparagine). Cadherin domains lie at 71–124 (FRIQ…APEF), 125–237 (PFKT…PPWF), 249–354 (IQAQ…PPRF), and 355–459 (PQRL…PPST). Positions 452 to 661 (SEQEPPSTDV…SSGGGPSEDK (210 aa)) are disordered. Positions 506–518 (SGTTLRPPTSSTP) are enriched in low complexity. Asn-526 carries an N-linked (GlcNAc...) asparagine glycan. Composition is skewed to polar residues over residues 539–549 (TAQTPKPGTSQ), 556–594 (GTST…SHQP), and 602–611 (AQTPEAGTSQ). 3 consecutive repeat copies span residues 540–570 (AQTP…SGGT), 571–601 (AQTP…GGGT), and 602–631 (AQTP…PGGG). A 4 X 31 AA approximate tandem repeats region spans residues 540–645 (AQTPKPGTSQ…PEPGTSQPMP (106 aa)). One copy of the 4; truncated repeat lies at 632 to 645 (TAQTPEPGTSQPMP). The span at 633–652 (AQTPEPGTSQPMPLSKSTPS) shows a compositional bias: low complexity. Residues 670–690 (ALGGVLGALLLLALLGLAVLV) form a helical membrane-spanning segment. The Cytoplasmic segment spans residues 691 to 845 (HKHYGPRLKC…DAPGGDDSYI (155 aa)). The interval 691 to 845 (HKHYGPRLKC…DAPGGDDSYI (155 aa)) is mediates interaction with USH1C and MYO7B and is required for proper localization to microvilli tips and function in microvilli organization. Residues 724-789 (ANWAPVPSPT…KERRPEGGYK (66 aa)) form a disordered region. Over residues 729–762 (VPSPTHDPKPAEAPMPAEPAPPGPASPGGAPEPP) the composition is skewed to pro residues. Ser-770 bears the Phosphoserine mark. The residue at position 810 (Thr-810) is a Phosphothreonine. The interval 811–845 (LDVDGASDSGSGDEGEGAGRGGGPYDAPGGDDSYI) is disordered. Ser-817, Ser-819, and Ser-821 each carry phosphoserine. Over residues 835-845 (YDAPGGDDSYI) the composition is skewed to low complexity.

In terms of assembly, part of the IMAC/intermicrovillar adhesion complex/intermicrovillar tip-link complex composed of ANKS4B, MYO7B, USH1C, CDHR2 and CDHR5. Interacts (via cytoplasmic domain) with USH1C and MYO7B; required for proper localization of CDHR5 to microvilli tips and its function in brush border differentiation. N- and O-glycosylated. In terms of tissue distribution, highest expression in kidney, liver, colon and small intestine. In kidney, expressed apically along brush border of proximal convoluted tubule but not in cortical collecting ducts. Isoform 1 is expressed primarily in adult small intestine and colon. Isoform 2 is highly expressed in fetal liver. Expressed in duodenum with higher expression in enterocytes along the villus axis and lower expression in crypts (at protein level).

The protein resides in the apical cell membrane. It is found in the cell projection. It localises to the microvillus membrane. Functionally, intermicrovillar adhesion molecule that forms, via its extracellular domain, calcium-dependent heterophilic complexes with CDHR2 on adjacent microvilli. Thereby, controls the packing of microvilli at the apical membrane of epithelial cells. Through its cytoplasmic domain, interacts with microvillus cytoplasmic proteins to form the intermicrovillar adhesion complex/IMAC. This complex plays a central role in microvilli and epithelial brush border differentiation. This is Cadherin-related family member 5 from Homo sapiens (Human).